A 562-amino-acid chain; its full sequence is Formate--tetrahydrofolate ligase (562 aa).

77 to 84 (TPAGEGKS) is an ATP binding site.

This sequence belongs to the formate--tetrahydrofolate ligase family.

The enzyme catalyses (6S)-5,6,7,8-tetrahydrofolate + formate + ATP = (6R)-10-formyltetrahydrofolate + ADP + phosphate. Its pathway is one-carbon metabolism; tetrahydrofolate interconversion. The sequence is that of Formate--tetrahydrofolate ligase from Corynebacterium jeikeium (strain K411).